The following is a 99-amino-acid chain: Integration host factor subunit alpha (99 aa).

The protein belongs to the bacterial histone-like protein family. In terms of assembly, heterodimer of an alpha and a beta chain.

In terms of biological role, this protein is one of the two subunits of integration host factor, a specific DNA-binding protein that functions in genetic recombination as well as in transcriptional and translational control. In Xanthomonas axonopodis pv. citri (strain 306), this protein is Integration host factor subunit alpha (ihfA).